Consider the following 528-residue polypeptide: NAD(P)H-quinone oxidoreductase chain 4 1 (528 aa).

14 consecutive transmembrane segments (helical) span residues 7-27, 32-52, 86-106, 114-134, 136-156, 168-188, 208-228, 242-262, 276-296, 310-330, 331-351, 375-395, 417-437, and 463-483; these read FPWLSVLVLLPLLAAFGIPLI, WVRWYALAVGAFDLGLMAYVF, LSLPLVLLSGLITTLSIVAAW, LFFFLLLLMYGAQVGVFLAQD, LLFFLMWEIELVPVYLLISIW, FILYTAAASIFILVGSLAMAF, ALELLAYAALLIAFGVKLPIF, SAPISMILAGVLLKMGGYGLI, FAPVLAVLGVVNIIYGALAAF, IAHMGFVLIGISAFTELGING, AVLQMISHGLIAAVLFFLTGI, FALFTAGSLASLALPGMSGFV, GIALLAAVGIILTPIYLLSML, and MAVALCLLLPILGIGFYPRLA.

It belongs to the complex I subunit 4 family.

The protein resides in the cellular thylakoid membrane. It catalyses the reaction a plastoquinone + NADH + (n+1) H(+)(in) = a plastoquinol + NAD(+) + n H(+)(out). The enzyme catalyses a plastoquinone + NADPH + (n+1) H(+)(in) = a plastoquinol + NADP(+) + n H(+)(out). NDH-1 shuttles electrons from NAD(P)H, via FMN and iron-sulfur (Fe-S) centers, to quinones in the respiratory chain. The immediate electron acceptor for the enzyme in this species is believed to be plastoquinone. Couples the redox reaction to proton translocation (for every two electrons transferred, four hydrogen ions are translocated across the cytoplasmic membrane), and thus conserves the redox energy in a proton gradient. The sequence is that of NAD(P)H-quinone oxidoreductase chain 4 1 from Synechococcus sp. (strain JA-2-3B'a(2-13)) (Cyanobacteria bacterium Yellowstone B-Prime).